A 490-amino-acid chain; its full sequence is Tektin-3 (490 aa).

O-linked (GalNAc...) threonine glycosylation is found at threonine 7, threonine 9, and threonine 11. Residues asparagine 41, asparagine 86, asparagine 111, and asparagine 276 are each glycosylated (N-linked (GlcNAc...) asparagine). Positions 415 to 461 form a coiled coil; that stretch reads MAQLRLVNEVYEVDETIQTLQQRLRDSEDTLQSLAHTKATLEHDLAV.

Belongs to the tektin family. Microtubule inner protein component of sperm flagellar doublet microtubules. Interacts with TEKT1, TEKT2, TEKT4 and TEKT5. Interacts with CCDC38. Post-translationally, N- and O-glycosylated. In terms of processing, ubiquitinated, leading to its degradation. Deubiquitinated by USP16, promoting its stability. May be proteolytically processed during the epididymal transit of spermatozoa. Expressed preferentially in testis. Expressed predominantly in late pachytene spermatocytes and early round spermatids. Expressed in spermatozoa.

The protein localises to the cytoplasm. It is found in the cytoskeleton. Its subcellular location is the cilium axoneme. The protein resides in the flagellum axoneme. It localises to the cytoplasmic vesicle. The protein localises to the secretory vesicle. It is found in the acrosome outer membrane. Functionally, microtubule inner protein (MIP) part of the dynein-decorated doublet microtubules (DMTs) in cilia and flagellar axoneme. Forms filamentous polymers in the walls of ciliary and flagellar microtubules. Required for normal sperm mobility. This Mus musculus (Mouse) protein is Tektin-3 (Tekt3).